A 227-amino-acid chain; its full sequence is 7-cyano-7-deazaguanine synthase (227 aa).

9-19 (LSGGLDSATVL) is an ATP binding site. Zn(2+)-binding residues include Cys189, Cys199, Cys202, and Cys205.

It belongs to the QueC family. Zn(2+) serves as cofactor.

The enzyme catalyses 7-carboxy-7-deazaguanine + NH4(+) + ATP = 7-cyano-7-deazaguanine + ADP + phosphate + H2O + H(+). It functions in the pathway purine metabolism; 7-cyano-7-deazaguanine biosynthesis. In terms of biological role, catalyzes the ATP-dependent conversion of 7-carboxy-7-deazaguanine (CDG) to 7-cyano-7-deazaguanine (preQ(0)). The chain is 7-cyano-7-deazaguanine synthase from Cupriavidus necator (strain ATCC 17699 / DSM 428 / KCTC 22496 / NCIMB 10442 / H16 / Stanier 337) (Ralstonia eutropha).